We begin with the raw amino-acid sequence, 326 residues long: Nucleoporin Nup37 (326 aa).

7 WD repeats span residues 6-54 (SRNA…FQEE), 61-109 (IQYK…LFTS), 115-154 (NEYK…IWNL), 159-195 (TAHF…FYDL), 199-237 (QAIL…IWDI), 242-282 (YPQN…QFQI), and 287-324 (HPQP…FWVT).

Component of the Nup107-160 subcomplex of the nuclear pore complex (NPC). The Nup107-160 subcomplex includes NUP160, NUP133, NUP107, NUP98, NUP85, NUP43, NUP37, SEH1 and SEC13.

The protein resides in the chromosome. The protein localises to the centromere. It localises to the kinetochore. Its subcellular location is the nucleus. It is found in the nuclear pore complex. Component of the Nup107-160 subcomplex of the nuclear pore complex (NPC). The Nup107-160 subcomplex is required for the assembly of a functional NPC. The Nup107-160 subcomplex is also required for normal kinetochore microtubule attachment, mitotic progression and chromosome segregation. This is Nucleoporin Nup37 (NUP37) from Homo sapiens (Human).